A 152-amino-acid polypeptide reads, in one-letter code: Xanthine-guanine phosphoribosyltransferase (152 aa).

5-phospho-alpha-D-ribose 1-diphosphate is bound by residues 37-38 and 88-96; these read RG and DDLVDTGNT. Asp89 is a binding site for Mg(2+). Positions 92 and 135 each coordinate guanine. Positions 92 and 135 each coordinate xanthine. Residues 92-96 and 134-135 contribute to the GMP site; these read DTGNT and WI.

This sequence belongs to the purine/pyrimidine phosphoribosyltransferase family. XGPT subfamily. Homotetramer. Requires Mg(2+) as cofactor.

It localises to the cell inner membrane. The enzyme catalyses GMP + diphosphate = guanine + 5-phospho-alpha-D-ribose 1-diphosphate. It catalyses the reaction XMP + diphosphate = xanthine + 5-phospho-alpha-D-ribose 1-diphosphate. The catalysed reaction is IMP + diphosphate = hypoxanthine + 5-phospho-alpha-D-ribose 1-diphosphate. Its pathway is purine metabolism; GMP biosynthesis via salvage pathway; GMP from guanine: step 1/1. It participates in purine metabolism; XMP biosynthesis via salvage pathway; XMP from xanthine: step 1/1. Purine salvage pathway enzyme that catalyzes the transfer of the ribosyl-5-phosphate group from 5-phospho-alpha-D-ribose 1-diphosphate (PRPP) to the N9 position of the 6-oxopurines guanine and xanthine to form the corresponding ribonucleotides GMP (guanosine 5'-monophosphate) and XMP (xanthosine 5'-monophosphate), with the release of PPi. To a lesser extent, also acts on hypoxanthine. This chain is Xanthine-guanine phosphoribosyltransferase, found in Mannheimia succiniciproducens (strain KCTC 0769BP / MBEL55E).